Reading from the N-terminus, the 419-residue chain is NFATC2-interacting protein (419 aa).

2 disordered regions span residues Met-1–Lys-131 and Asp-151–Ala-215. Gly residues predominate over residues Trp-11 to Gly-27. Low complexity predominate over residues Gln-35–Val-51. Ser-54, Ser-84, Ser-88, Ser-90, Ser-92, and Ser-127 each carry phosphoserine. Glycyl lysine isopeptide (Lys-Gly) (interchain with G-Cter in SUMO2) cross-links involve residues Lys-129 and Lys-131. The segment covering Arg-180–Phe-192 has biased composition (basic and acidic residues). Phosphoserine is present on residues Ser-198, Ser-201, Ser-204, Ser-220, and Ser-314. A coiled-coil region spans residues Ser-209 to Ser-231. Phosphothreonine occurs at positions 316 and 318. The 72-residue stretch at Leu-348 to Gly-419 folds into the Ubiquitin-like domain. Phosphoserine is present on residues Ser-369 and Ser-390.

As to quaternary structure, interacts with NFATC2, TRAF1, TRAF2 and PRMT1. Interacts with UBE2I/UBC9. In terms of processing, methylation at the N-terminus by PRMT1 modulates interaction with the NFAT complex and results in augmented cytokine production.

The protein localises to the nucleus. It localises to the cytoplasm. Functionally, in T-helper 2 (Th2) cells, regulates the magnitude of NFAT-driven transcription of a specific subset of cytokine genes, including IL3, IL4, IL5 and IL13, but not IL2. Recruits PRMT1 to the IL4 promoter; this leads to enhancement of histone H4 'Arg-3'-methylation and facilitates subsequent histone acetylation at the IL4 locus, thus promotes robust cytokine expression. Down-regulates formation of poly-SUMO chains by UBE2I/UBC9. The sequence is that of NFATC2-interacting protein (NFATC2IP) from Homo sapiens (Human).